Consider the following 110-residue polypeptide: Cation efflux system protein CusF (110 aa).

An N-terminal signal peptide occupies residues 1 to 21 (MKKALQVAMFSLFTVIGFNAQ).

As to quaternary structure, the cus efflux system is composed of CusA, CusB, CusC and CusF. Interacts with copper-exporting P-type ATPase CopA; when this protein is precharged with copper it binds very little CopA.

The protein localises to the periplasm. In terms of biological role, part of a cation efflux system that mediates resistance to copper and silver. Binds one copper per polypeptide. The chain is Cation efflux system protein CusF (cusF) from Escherichia coli (strain K12).